The primary structure comprises 444 residues: Tubulin beta chain (444 aa).

GTP contacts are provided by Q11, E68, S137, G141, T142, G143, N203, and N225. E68 serves as a coordination point for Mg(2+). The segment at Q424–M444 is disordered. Over residues T427 to M444 the composition is skewed to acidic residues.

It belongs to the tubulin family. As to quaternary structure, dimer of alpha and beta chains. A typical microtubule is a hollow water-filled tube with an outer diameter of 25 nm and an inner diameter of 15 nM. Alpha-beta heterodimers associate head-to-tail to form protofilaments running lengthwise along the microtubule wall with the beta-tubulin subunit facing the microtubule plus end conferring a structural polarity. Microtubules usually have 13 protofilaments but different protofilament numbers can be found in some organisms and specialized cells. Mg(2+) is required as a cofactor.

The protein resides in the cytoplasm. It localises to the cytoskeleton. Its function is as follows. Tubulin is the major constituent of microtubules, a cylinder consisting of laterally associated linear protofilaments composed of alpha- and beta-tubulin heterodimers. Microtubules grow by the addition of GTP-tubulin dimers to the microtubule end, where a stabilizing cap forms. Below the cap, tubulin dimers are in GDP-bound state, owing to GTPase activity of alpha-tubulin. This Achlya klebsiana protein is Tubulin beta chain.